Reading from the N-terminus, the 114-residue chain is Chaperonin GroEL (114 aa).

22–26 lines the ATP pocket; the sequence is DGTTT.

The protein belongs to the chaperonin (HSP60) family. In terms of assembly, forms a cylinder of 14 subunits composed of two heptameric rings stacked back-to-back. Interacts with the co-chaperonin GroES.

It is found in the cytoplasm. The enzyme catalyses ATP + H2O + a folded polypeptide = ADP + phosphate + an unfolded polypeptide.. In terms of biological role, together with its co-chaperonin GroES, plays an essential role in assisting protein folding. The GroEL-GroES system forms a nano-cage that allows encapsulation of the non-native substrate proteins and provides a physical environment optimized to promote and accelerate protein folding. The polypeptide is Chaperonin GroEL (Mycobacterium ulcerans).